The following is a 628-amino-acid chain: 3-hydroxy-3-methylglutaryl-coenzyme A reductase 2 (628 aa).

2 consecutive transmembrane segments (helical) span residues 38 to 58 and 78 to 98; these read PLYL…YFLL and EIVA…FFGI. A linker region spans residues 99–212; the sequence is DFVQSLIIRP…HEKTVIVTTE (114 aa). The N-linked (GlcNAc...) asparagine glycan is linked to Asn-153. Positions 213–628 are catalytic; sequence EDEEIIKSVV…SSKDMSNLSS (416 aa). Glu-307 acts as the Charge relay system in catalysis. Asn-371 is a glycosylation site (N-linked (GlcNAc...) asparagine). Lys-439 acts as the Charge relay system in catalysis. Asn-484 carries an N-linked (GlcNAc...) asparagine glycan. Asp-515 serves as the catalytic Charge relay system. Residue His-613 is the Proton donor of the active site. Residues Asn-617 and Asn-625 are each glycosylated (N-linked (GlcNAc...) asparagine).

Belongs to the HMG-CoA reductase family.

It localises to the endoplasmic reticulum membrane. It is found in the mitochondrion membrane. The protein localises to the plastid membrane. It catalyses the reaction (R)-mevalonate + 2 NADP(+) + CoA = (3S)-3-hydroxy-3-methylglutaryl-CoA + 2 NADPH + 2 H(+). It participates in metabolic intermediate biosynthesis; (R)-mevalonate biosynthesis; (R)-mevalonate from acetyl-CoA: step 3/3. Catalyzes the synthesis of mevalonate. The specific precursor of all isoprenoid compounds present in plants. This is 3-hydroxy-3-methylglutaryl-coenzyme A reductase 2 (HMG2) from Gossypium hirsutum (Upland cotton).